We begin with the raw amino-acid sequence, 469 residues long: UDP-N-acetylmuramoylalanine--D-glutamate ligase (469 aa).

125 to 131 (GTNGKTT) contributes to the ATP binding site.

Belongs to the MurCDEF family.

It localises to the cytoplasm. The enzyme catalyses UDP-N-acetyl-alpha-D-muramoyl-L-alanine + D-glutamate + ATP = UDP-N-acetyl-alpha-D-muramoyl-L-alanyl-D-glutamate + ADP + phosphate + H(+). It participates in cell wall biogenesis; peptidoglycan biosynthesis. Cell wall formation. Catalyzes the addition of glutamate to the nucleotide precursor UDP-N-acetylmuramoyl-L-alanine (UMA). The chain is UDP-N-acetylmuramoylalanine--D-glutamate ligase from Prochlorococcus marinus (strain NATL2A).